The primary structure comprises 442 residues: Serine protease AprX (442 aa).

The Peptidase S8 domain occupies 122-439 (KALLDTATEA…AGAVNAENSV (318 aa)). Residues Asp-155 and His-187 each act as charge relay system in the active site. The segment at 318-337 (DNNTASSDDDTVASFSSRGP) is disordered. Residue Ser-384 is the Charge relay system of the active site. Positions 423–442 (EDPNIYGAGAVNAENSVPGQ) are disordered.

The protein belongs to the peptidase S8 family.

The protein resides in the cytoplasm. With respect to regulation, is completely inhibited by phenylmethanesulphonylfluoride (PMSF) in vitro. Functionally, displays serine protease activity. Seems to have a broad substrate specificity. The sequence is that of Serine protease AprX (aprX) from Bacillus subtilis (strain 168).